The chain runs to 254 residues: Putative ankyrin-containing lipoprotein Lxx09580 (254 aa).

The signal sequence occupies residues Met1–Gly22. The N-palmitoyl cysteine moiety is linked to residue Cys23. The S-diacylglycerol cysteine moiety is linked to residue Cys23. ANK repeat units follow at residues Ala56 to Asp85, Gly89 to Ala118, Ile122 to Ala151, Phe155 to His184, and Pro188 to Ile222.

The protein localises to the cell membrane. The sequence is that of Putative ankyrin-containing lipoprotein Lxx09580 from Leifsonia xyli subsp. xyli (strain CTCB07).